The primary structure comprises 620 residues: Guanylate-binding protein 3 (620 aa).

A GTPase domain (Globular) region spans residues Met-1 to Cys-304. In terms of domain architecture, GB1/RHD3-type G spans Ala-29–Lys-271. GTP contacts are provided by residues Gly-39–Ser-46, Leu-61–Ser-63, and Asp-91–Leu-95. 2 coiled-coil regions span residues Lys-375–Leu-411 and Asp-477–Lys-582.

This sequence belongs to the TRAFAC class dynamin-like GTPase superfamily. GB1/RHD3 GTPase family. GB1 subfamily. As to quaternary structure, heterodimer with other family members, including GBP1, GBP2 and GBP5. Dimerization regulates subcellular location. As to expression, brain, lung, heart, spleen, kidney, liver and intestine.

Its subcellular location is the cytoplasm. The protein resides in the perinuclear region. The protein localises to the golgi apparatus membrane. It catalyses the reaction GTP + H2O = GDP + phosphate + H(+). Its function is as follows. Interferon (IFN)-inducible GTPase that plays important roles in innate immunity against a diverse range of bacterial, viral and protozoan pathogens. Hydrolyzes GTP very efficiently; GDP rather than GMP is the major reaction product. Following infection, recruited to the pathogen-containing vacuoles or vacuole-escaped bacteria and acts as a positive regulator of inflammasome assembly by promoting the release of inflammasome ligands from bacteria. Acts by promoting lysis of pathogen-containing vacuoles, releasing pathogens into the cytosol. Following pathogen release in the cytosol, promotes recruitment of proteins that mediate bacterial cytolysis, such as Gm12250/Irgb10: this liberates ligands that are detected by inflammasomes, such as lipopolysaccharide (LPS) that activates the non-canonical CASP4/CASP11 inflammasome or double-stranded DNA (dsDNA) that activates the AIM2 inflammasome. May play a role in erythroid differentiation. The polypeptide is Guanylate-binding protein 3 (Mus musculus (Mouse)).